The primary structure comprises 236 residues: Ubiquinone biosynthesis O-methyltransferase (236 aa).

Residues arginine 39, glycine 59, aspartate 80, and methionine 124 each coordinate S-adenosyl-L-methionine.

The protein belongs to the methyltransferase superfamily. UbiG/COQ3 family.

It carries out the reaction a 3-demethylubiquinol + S-adenosyl-L-methionine = a ubiquinol + S-adenosyl-L-homocysteine + H(+). It catalyses the reaction a 3-(all-trans-polyprenyl)benzene-1,2-diol + S-adenosyl-L-methionine = a 2-methoxy-6-(all-trans-polyprenyl)phenol + S-adenosyl-L-homocysteine + H(+). The protein operates within cofactor biosynthesis; ubiquinone biosynthesis. Its function is as follows. O-methyltransferase that catalyzes the 2 O-methylation steps in the ubiquinone biosynthetic pathway. The protein is Ubiquinone biosynthesis O-methyltransferase of Shewanella oneidensis (strain ATCC 700550 / JCM 31522 / CIP 106686 / LMG 19005 / NCIMB 14063 / MR-1).